A 125-amino-acid polypeptide reads, in one-letter code: Large ribosomal subunit protein bL12 (125 aa).

The protein belongs to the bacterial ribosomal protein bL12 family. In terms of assembly, homodimer. Part of the ribosomal stalk of the 50S ribosomal subunit. Forms a multimeric L10(L12)X complex, where L10 forms an elongated spine to which 2 to 4 L12 dimers bind in a sequential fashion. Binds GTP-bound translation factors.

Functionally, forms part of the ribosomal stalk which helps the ribosome interact with GTP-bound translation factors. Is thus essential for accurate translation. The polypeptide is Large ribosomal subunit protein bL12 (Rickettsia africae (strain ESF-5)).